We begin with the raw amino-acid sequence, 317 residues long: L-lactate dehydrogenase (317 aa).

NAD(+) is bound by residues 16-17 (FV), aspartate 38, lysine 43, tyrosine 69, and 83-84 (GA). Glutamine 86 and arginine 92 together coordinate substrate. NAD(+)-binding positions include serine 105, 122-124 (ATN), and serine 147. 124–127 (NPVD) is a binding site for substrate. Substrate is bound at residue 152 to 155 (DTAR). Beta-D-fructose 1,6-bisphosphate contacts are provided by residues arginine 157 and 169-172 (QNVH). Residue histidine 179 is the Proton acceptor of the active site. Tyrosine 224 carries the post-translational modification Phosphotyrosine. Threonine 233 is a binding site for substrate.

It belongs to the LDH/MDH superfamily. LDH family. As to quaternary structure, exists as a dimer and a tetramer (dimer of dimers). The conversion occurs via the binding of fructose 1,6-bisphosphate (FBP) to the dimer.

Its subcellular location is the cytoplasm. It carries out the reaction (S)-lactate + NAD(+) = pyruvate + NADH + H(+). It participates in fermentation; pyruvate fermentation to lactate; (S)-lactate from pyruvate: step 1/1. With respect to regulation, allosterically activated by fructose 1,6-bisphosphate (FBP). The improvement in affinity for substrate occurs in two steps; the binding of fructose 1,6-bisphosphate (FBP) to the dimer, and the dimer to tetramer conversion. Catalyzes the conversion of lactate to pyruvate. In Geobacillus stearothermophilus (Bacillus stearothermophilus), this protein is L-lactate dehydrogenase.